Consider the following 481-residue polypeptide: Aromatic amino acid aminotransferase C1773.13 (481 aa).

It belongs to the class-I pyridoxal-phosphate-dependent aminotransferase family. Requires pyridoxal 5'-phosphate as cofactor.

It localises to the cytoplasm. It catalyses the reaction an aromatic L-alpha-amino acid + 2-oxoglutarate = an aromatic oxo-acid + L-glutamate. Functionally, has aromatic amino acid transaminase activity. This chain is Aromatic amino acid aminotransferase C1773.13, found in Schizosaccharomyces pombe (strain 972 / ATCC 24843) (Fission yeast).